The sequence spans 541 residues: Membrane protein insertase YidC (541 aa).

5 consecutive transmembrane segments (helical) span residues 6-26 (FFLI…WEIT), 356-376 (IIHS…LAFY), 430-450 (LPIL…LEMV), 463-483 (LSAP…MFIQ), and 498-518 (IMMA…SGLV).

This sequence belongs to the OXA1/ALB3/YidC family. Type 1 subfamily. As to quaternary structure, interacts with the Sec translocase complex via SecD. Specifically interacts with transmembrane segments of nascent integral membrane proteins during membrane integration.

It is found in the cell inner membrane. Functionally, required for the insertion and/or proper folding and/or complex formation of integral membrane proteins into the membrane. Involved in integration of membrane proteins that insert both dependently and independently of the Sec translocase complex, as well as at least some lipoproteins. Aids folding of multispanning membrane proteins. This chain is Membrane protein insertase YidC, found in Vesicomyosocius okutanii subsp. Calyptogena okutanii (strain HA).